Here is a 280-residue protein sequence, read N- to C-terminus: Ribosomal RNA small subunit methyltransferase A (280 aa).

S-adenosyl-L-methionine is bound by residues histidine 13, leucine 15, glycine 40, glutamate 61, aspartate 85, and asparagine 105.

Belongs to the class I-like SAM-binding methyltransferase superfamily. rRNA adenine N(6)-methyltransferase family. RsmA subfamily.

It is found in the cytoplasm. It carries out the reaction adenosine(1518)/adenosine(1519) in 16S rRNA + 4 S-adenosyl-L-methionine = N(6)-dimethyladenosine(1518)/N(6)-dimethyladenosine(1519) in 16S rRNA + 4 S-adenosyl-L-homocysteine + 4 H(+). Functionally, specifically dimethylates two adjacent adenosines (A1518 and A1519) in the loop of a conserved hairpin near the 3'-end of 16S rRNA in the 30S particle. May play a critical role in biogenesis of 30S subunits. The chain is Ribosomal RNA small subunit methyltransferase A from Phocaeicola vulgatus (strain ATCC 8482 / DSM 1447 / JCM 5826 / CCUG 4940 / NBRC 14291 / NCTC 11154) (Bacteroides vulgatus).